The chain runs to 790 residues: Threonine--tRNA ligase 2, cytoplasmic (790 aa).

The residue at position 2 (Ala-2) is an N-acetylalanine. A coiled-coil region spans residues 13–68; it reads SRLQRQEEDIRWLCAEVQRLRDEQLRGPERGQAEGPRLTREVAQLQAENRDLHQRL. Positions 80–117 are disordered; the sequence is RTEAGRAAAHEPPTQNQEKDTKKKRLKQSEPGREVKQP. Residues 96–117 are compositionally biased toward basic and acidic residues; that stretch reads QEKDTKKKRLKQSEPGREVKQP. The TGS domain maps to 148–210; that stretch reads NVISVRVAGG…EGDSTVELLM (63 aa). Residue Ser-441 is modified to Phosphoserine. A Nuclear localization signal motif is present at residues 774 to 780; that stretch reads KLKNLKK.

Belongs to the class-II aminoacyl-tRNA synthetase family. In terms of assembly, may be a component of the multisynthetase complex (MSC), a large multi-subunit complex which contains at least eight different aminoacyl-tRNA synthetases plus three auxillary subunits AIMP1, AIMP2 and EEF1E1. Interacts with the MSC components EPRS1, AIMP1, AIMP2 and KARS1. As to expression, ubiquitous (at protein level). Strongly expressed in muscle (at protein level). Moderately expressed in heart and liver (at protein level). Weakly expressed in stomach, kidney, testis, spleen, brain, fat and lung (at protein level).

It localises to the cytoplasm. The protein localises to the nucleus. The enzyme catalyses tRNA(Thr) + L-threonine + ATP = L-threonyl-tRNA(Thr) + AMP + diphosphate + H(+). In terms of biological role, catalyzes the attachment of threonine to tRNA(Thr) in a two-step reaction: threonine is first activated by ATP to form Thr-AMP and then transferred to the acceptor end of tRNA(Thr). Also edits incorrectly charged tRNA(Thr) via its editing domain, at the post-transfer stage. The polypeptide is Threonine--tRNA ligase 2, cytoplasmic (Tars3) (Mus musculus (Mouse)).